Here is a 50-residue protein sequence, read N- to C-terminus: Small ribosomal subunit protein eS31 (50 aa).

Positions 22, 25, 40, and 43 each coordinate Zn(2+). The C4-type zinc finger occupies cysteine 22–cysteine 43.

The protein belongs to the eukaryotic ribosomal protein eS31 family. As to quaternary structure, part of the 30S ribosomal subunit. Zn(2+) serves as cofactor.

This chain is Small ribosomal subunit protein eS31, found in Pyrococcus furiosus (strain ATCC 43587 / DSM 3638 / JCM 8422 / Vc1).